A 386-amino-acid chain; its full sequence is S-adenosylmethionine synthase (386 aa).

H17 provides a ligand contact to ATP. D19 contributes to the Mg(2+) binding site. E45 contacts K(+). The L-methionine site is built by E58 and Q101. The tract at residues 101-111 (QSPDISQGVTE) is flexible loop. Residues 168–170 (DAK), D242, 248–249 (RK), A265, and K269 each bind ATP. D242 provides a ligand contact to L-methionine. K273 is an L-methionine binding site.

It belongs to the AdoMet synthase family. In terms of assembly, homotetramer; dimer of dimers. Requires Mg(2+) as cofactor. It depends on K(+) as a cofactor.

The protein resides in the cytoplasm. It carries out the reaction L-methionine + ATP + H2O = S-adenosyl-L-methionine + phosphate + diphosphate. It functions in the pathway amino-acid biosynthesis; S-adenosyl-L-methionine biosynthesis; S-adenosyl-L-methionine from L-methionine: step 1/1. Catalyzes the formation of S-adenosylmethionine (AdoMet) from methionine and ATP. The overall synthetic reaction is composed of two sequential steps, AdoMet formation and the subsequent tripolyphosphate hydrolysis which occurs prior to release of AdoMet from the enzyme. In Leptospira borgpetersenii serovar Hardjo-bovis (strain JB197), this protein is S-adenosylmethionine synthase.